We begin with the raw amino-acid sequence, 535 residues long: Probable deoxycholate-binding periplasmic protein YgiS (535 aa).

A signal peptide spans M1–A20.

It belongs to the bacterial solute-binding protein 5 family.

The protein resides in the periplasm. Its function is as follows. Probably part of a deoxycholate transport system. Its expression in the presence of deoxycholate in a ygiS deletion mutant increases intracellular deoxycholate levels and decreases cell growth; higher expression in the presence of deoxycholate inhibits cell growth completely. Bile acid detergents such as deoxycholate are important for host defense against bacterial growth in the gall bladder and duodenum. In Escherichia coli (strain K12), this protein is Probable deoxycholate-binding periplasmic protein YgiS (ygiS).